Reading from the N-terminus, the 180-residue chain is NEDD8-conjugating enzyme ubc-12 (180 aa).

The UBC core domain occupies 24–180 (VRDKLLAQEL…RVREYISRYC (157 aa)). Cysteine 112 (glycyl thioester intermediate) is an active-site residue.

This sequence belongs to the ubiquitin-conjugating enzyme family. UBC12 subfamily.

It is found in the cytoplasm. It carries out the reaction [E1 NEDD8-activating enzyme]-S-[NEDD8 protein]-yl-L-cysteine + [E2 NEDD8-conjugating enzyme]-L-cysteine = [E1 NEDD8-activating enzyme]-L-cysteine + [E2 NEDD8-conjugating enzyme]-S-[NEDD8-protein]-yl-L-cysteine.. It participates in protein modification; protein neddylation. In terms of biological role, accepts the ubiquitin-like protein NEDD8 from the uba-3-ula-1 E1 complex and catalyzes its covalent attachment to other proteins. Plays a role in male tail tip morphogenesis. The sequence is that of NEDD8-conjugating enzyme ubc-12 from Caenorhabditis elegans.